A 590-amino-acid polypeptide reads, in one-letter code: Guanylate-binding protein 5 (590 aa).

Residues 1–306 (MAPEIHMPEP…LTYVDAINSG (306 aa)) are NLRP3-binding. The tract at residues 1–310 (MAPEIHMPEP…DAINSGALPS (310 aa)) is GTPase domain (Globular). The GB1/RHD3-type G domain maps to 35-277 (TQPVVVVAIV…FCSHIFTQSK (243 aa)). Residues 45 to 52 (GLYRTGKS), 67 to 69 (VGS), 182 to 183 (RD), and L246 each bind GTP. The segment at 529–590 (QIALEKARVA…RRHHHDCVIS (62 aa)) is required for tetramerization, but not for dimerization. C587 is subject to Cysteine methyl ester. Residue C587 is the site of S-geranylgeranyl cysteine attachment. Positions 588-590 (VIS) are cleaved as a propeptide — removed in mature form.

It belongs to the TRAFAC class dynamin-like GTPase superfamily. GB1/RHD3 GTPase family. GB1 subfamily. As to quaternary structure, homodimer; homodimerizes upon GTP-binding, forming a close face-to-face dimer. Heterodimer with other family members, including GBP1, GBP2, GBP3 and GBP4. May also form tetramers (dimer of dimers) in the presence of GTP. Interacts with NLRP3, possibly in its tetrameric form, and promotes PYCARD/ASC polymerization. Post-translationally, isoprenylation is required for proper subcellular location. Low expression, if any, in many tissues in the absence of stimulation.

It localises to the cytoplasmic vesicle membrane. The protein resides in the golgi apparatus membrane. The protein localises to the cytoplasm. It catalyses the reaction GTP + H2O = GDP + phosphate + H(+). Its function is as follows. Interferon (IFN)-inducible GTPase that plays important roles in innate immunity against a diverse range of bacterial, viral and protozoan pathogens. Hydrolyzes GTP, but in contrast to other family members, does not produce GMP. Following infection, recruited to the pathogen-containing vacuoles or vacuole-escaped bacteria and acts as a positive regulator of inflammasome assembly by promoting the release of inflammasome ligands from bacteria. Acts by promoting lysis of pathogen-containing vacuoles, releasing pathogens into the cytosol. Following pathogen release in the cytosol, promotes recruitment of proteins that mediate bacterial cytolysis, such as Gm12250/Irgb10: this liberates ligands that are detected by inflammasomes, such as lipopolysaccharide (LPS) that activates the non-canonical CASP4/CASP11 inflammasome or double-stranded DNA (dsDNA) that activates the AIM2 inflammasome. As an activator of NLRP3 inflammasome assembly: promotes selective NLRP3 inflammasome assembly in response to microbial and soluble, but not crystalline, agents. Independently of its GTPase activity, acts as an inhibitor of various viruses infectivity by inhibiting FURIN-mediated maturation of viral envelope proteins. The protein is Guanylate-binding protein 5 of Mus musculus (Mouse).